Here is a 583-residue protein sequence, read N- to C-terminus: Pentatricopeptide repeat-containing protein At3g59040 (583 aa).

10 PPR repeats span residues 138 to 172, 173 to 207, 208 to 242, 246 to 280, 281 to 312, 313 to 347, 348 to 382, 383 to 417, 418 to 452, and 453 to 487; these read SEID…GSTP, NVIS…GPEP, SAIT…KKSP, DQKM…GVPQ, STVT…DIQP, DVVS…GVRP, THKA…RIFP, DLWS…GFEP, NIVT…GIKA, and NQTI…GVPP. The tract at residues 525–583 is disordered; that stretch reads VYGSDDDEEGVEDISSESSDDEDEGDDDDDDARETVLYDKPQEGSLGYGSLQTEELVGL. The segment covering 528 to 556 has biased composition (acidic residues); that stretch reads SDDDEEGVEDISSESSDDEDEGDDDDDDA. Residues 557-566 are compositionally biased toward basic and acidic residues; it reads RETVLYDKPQ.

This sequence belongs to the PPR family. P subfamily.

This Arabidopsis thaliana (Mouse-ear cress) protein is Pentatricopeptide repeat-containing protein At3g59040.